The primary structure comprises 511 residues: Fusicocca-1,10(14)-diene-8beta,16-diol C-9 hydroxylase (511 aa).

A helical transmembrane segment spans residues 7–29 (TVAALAAVFVAGTLLSRLASWIR). N-linked (GlcNAc...) asparagine glycans are attached at residues Asn64, Asn163, and Asn343. Cys450 lines the heme pocket.

This sequence belongs to the cytochrome P450 family. The cofactor is heme.

It is found in the membrane. It functions in the pathway mycotoxin biosynthesis. Functionally, cytochrome P450 monooxygenase; part of the 2 gene clusters that mediate the biosynthesis of fusicoccins, diterpene glucosides that display phytohormone-like activity and function as potent activators of plasma membrane H(+)-ATPases in plants by modifying 14-3-3 proteins and cause the plant disease constriction canker. The first step in the pathway is performed by the fusicoccadiene synthase PaFS that possesses both prenyl transferase and terpene cyclase activity, converting isopentenyl diphosphate and dimethylallyl diphosphate into geranylgeranyl diphosphate (GGDP) and successively converting GGDP into fusicocca-2,10(14)-diene, a precursor for fusicoccin H. The second step is the oxidation at the C-8 position by the cytochrome P450 monooxygenase PaP450-2 to yield fusicocca-2,10(14)-diene-8-beta-ol. The cytochrome P450 monooxygenase PaP450-1 then catalyzes the hydroxylation at the C-16 position to produce fusicocca-2,10(14)-diene-8-beta,16-diol. The dioxygenase fc-dox then catalyzes the 16-oxydation of fusicocca-2,10(14)-diene-8-beta,16-diol to yield an aldehyde (8-beta-hydroxyfusicocca-1,10(14)-dien-16-al). The short-chain dehydrogenase/reductase fc-sdr catalyzes the reduction of the aldehyde to yield fusicocca-1,10(14)-diene-8-beta,16-diol. The next step is the hydroxylation at C-9 performed by the cytochrome P450 monooxygenase PaP450-3 that leads to fusicoccin H aglycon which is glycosylated to fusicoccin H by the O-glycosyltransferase PaGT. Hydroxylation at C-12 by the cytochrome P450 monooxygenase PaP450-4 leads then to the production of fusicoccin Q and is followed by methylation by the O-methyltransferase PaMT to yield fusicoccin P. Fusicoccin P is further converted to fusicoccin J via prenylation by the O-glucose prenyltransferase PaPT. Cytochrome P450 monooxygenase PaP450-5 then performs hydroxylation at C-19 to yield dideacetyl-fusicoccin A which is acetylated to 3'-O-deacetyl-fusicoccin A by the O-acetyltransferase PaAT-2. Finally, a another acetylation by the O-acetyltransferase PaAT-1 yields fusicoccin A. This is Fusicocca-1,10(14)-diene-8beta,16-diol C-9 hydroxylase from Phomopsis amygdali (Fusicoccum amygdali).